Reading from the N-terminus, the 903-residue chain is Dynamin-like GTPase msp1, mitochondrial (903 aa).

A mitochondrion-targeting transit peptide spans M1 to R78. Residues L86–A103 traverse the membrane as a helical segment. Basic and acidic residues predominate over residues V167 to D188. Residues V167–V198 form a disordered region. Residues V198–V214 form a helical membrane-spanning segment. A Dynamin-type G domain is found at A260–Q531. The tract at residues G270–S277 is G1 motif. The GTP site is built by S273, S274, G275, K276, S277, S278, and G292. Position 277 (S277) interacts with Mg(2+). The segment at V296 to R298 is G2 motif. Residues T297 and D370 each coordinate Mg(2+). A G3 motif region spans residues D370–G373. The segment at T438–D441 is G4 motif. 3 residues coordinate GTP: K439, D441, and S468. The G5 motif stretch occupies residues I467 to I470. The paddle region stretch occupies residues A691–K805. An intrachain disulfide couples C802 to C811. The GED domain occupies K805 to Q898.

The protein belongs to the TRAFAC class dynamin-like GTPase superfamily. Dynamin/Fzo/YdjA family. In terms of assembly, homooligomer. Interacts with cdr1. Cleavage of the transit peptide by mitochondrial processing protease (MPP) produces a long integral membrane form of msp1 (l-msp1). Further processing by a rhomboid protease after the transmembrane regions produces a short peripheral membrane form of msp1 (s-msp1). Both isoforms are required for full activity.

Its subcellular location is the mitochondrion inner membrane. It is found in the mitochondrion intermembrane space. It carries out the reaction GTP + H2O = GDP + phosphate + H(+). Dynamin-related GTPase that is essential for normal mitochondrial morphology by mediating fusion of the mitochondrial inner membranes and maintaining respiratory chain function. Exists in two forms: the transmembrane, long form (Dynamin-like GTPase msp1, long form; l-msp1), which is tethered to the inner mitochondrial membrane, and the short soluble form (Dynamin-like GTPase msp1, short form; s-msp1), which results from proteolytic cleavage and localizes in the intermembrane space. Both forms (l-msp1 and s-msp1) cooperate to catalyze the fusion of the mitochondrial inner membrane. Its role in mitochondrial morphology is required for mitochondrial genome maintenance. In terms of biological role, constitutes the transmembrane long form (l-msp1) that plays a central role in mitochondrial inner membrane fusion. L-msp1 and the soluble short form (s-msp1) form higher-order helical assemblies that coordinate the fusion of mitochondrial inner membranes. Inner membrane-anchored l-msp1 molecules initiate membrane remodeling by recruiting soluble s-msp1 to rapidly polymerize into a flexible cylindrical scaffold encaging the mitochondrial inner membrane. Once at the membrane surface, the formation of s-msp1 helices induce bilayer curvature. Msp1 dimerization through the paddle region, which inserts into cardiolipin-containing membrane, promotes GTP hydrolysis and the helical assembly of a flexible msp1 lattice on the membrane, which drives membrane curvature and mitochondrial fusion. Its function is as follows. Constitutes the soluble short form (s-msp1) generated by cleavage, which plays a central role in mitochondrial inner membrane fusion. The transmembrane long form (l-msp1) and the s-msp1 form higher-order helical assemblies that coordinate the fusion of mitochondrial inner membranes. Inner membrane-anchored l-msp1 molecules initiate membrane remodeling by recruiting soluble s-msp1 to rapidly polymerize into a flexible cylindrical scaffold encaging the mitochondrial inner membrane. Once at the membrane surface, the formation of s-msp1 helices induce bilayer curvature. Msp1 dimerization through the paddle region, which inserts into cardiolipin-containing membrane, promotes GTP hydrolysis and the helical assembly of a flexible msp1 lattice on the membrane, which drives membrane curvature and mitochondrial fusion. The chain is Dynamin-like GTPase msp1, mitochondrial from Schizosaccharomyces pombe (strain 972 / ATCC 24843) (Fission yeast).